A 376-amino-acid chain; its full sequence is Riboflavin biosynthesis protein RibD (376 aa).

Residues 1 to 150 (MEDFSEQQLF…QPYLYQRTHN (150 aa)) form a deaminase region. The CMP/dCMP-type deaminase domain maps to 6 to 128 (EQQLFFMRRA…MLRQAGIQVY (123 aa)). A Zn(2+)-binding site is contributed by H55. E57 acts as the Proton donor in catalysis. C80 and C89 together coordinate Zn(2+). A reductase region spans residues 151 to 376 (FPWTILKSAA…SPQVFEPIRN (226 aa)). Residue A159 participates in NADP(+) binding. S173 is a substrate binding site. W175 serves as a coordination point for NADP(+). Substrate is bound at residue R189. 2 residues coordinate NADP(+): T201 and D205. Positions 209 and 212 each coordinate substrate. Residue S230 coordinates NADP(+). E300 serves as a coordination point for substrate. NADP(+) is bound at residue 302–308 (GTTLHTS).

In the N-terminal section; belongs to the cytidine and deoxycytidylate deaminase family. The protein in the C-terminal section; belongs to the HTP reductase family. It depends on Zn(2+) as a cofactor.

The catalysed reaction is 2,5-diamino-6-hydroxy-4-(5-phosphoribosylamino)-pyrimidine + H2O + H(+) = 5-amino-6-(5-phospho-D-ribosylamino)uracil + NH4(+). It carries out the reaction 5-amino-6-(5-phospho-D-ribitylamino)uracil + NADP(+) = 5-amino-6-(5-phospho-D-ribosylamino)uracil + NADPH + H(+). The protein operates within cofactor biosynthesis; riboflavin biosynthesis; 5-amino-6-(D-ribitylamino)uracil from GTP: step 2/4. It functions in the pathway cofactor biosynthesis; riboflavin biosynthesis; 5-amino-6-(D-ribitylamino)uracil from GTP: step 3/4. In terms of biological role, converts 2,5-diamino-6-(ribosylamino)-4(3h)-pyrimidinone 5'-phosphate into 5-amino-6-(ribosylamino)-2,4(1h,3h)-pyrimidinedione 5'-phosphate. The sequence is that of Riboflavin biosynthesis protein RibD (ribD) from Chlamydia pneumoniae (Chlamydophila pneumoniae).